The chain runs to 947 residues: Pyruvate, phosphate dikinase 1, chloroplastic (947 aa).

Residues 1-62 (MAASVSRAIC…GRGQHCSPLR (62 aa)) constitute a chloroplast transit peptide. The disordered stretch occupies residues 21–54 (DREATSFARRSVAAPRPPHAKAAGVIRSDSGAGR). Position 63 is an N-acetylalanine; partial (A63). Position 309 is a phosphothreonine (T309). At S506 the chain carries Phosphoserine. T527 is subject to Phosphothreonine; by PDRP1. S528 carries the phosphoserine; by PDRP1 modification. H529 (tele-phosphohistidine intermediate) is an active-site residue. Substrate-binding residues include R635, R692, E821, G842, T843, N844, and D845. E821 is a Mg(2+) binding site. D845 provides a ligand contact to Mg(2+). Catalysis depends on C907, which acts as the Proton donor.

It belongs to the PEP-utilizing enzyme family. As to quaternary structure, homotetramer. Mg(2+) serves as cofactor. In terms of processing, phosphorylation of Thr-527 in the dark inactivates the enzyme, dephosphorylation upon light stimulation reactivates the enzyme. More highly phosphorylated when grown under high rather than low light regimes (70 vs 900 umol photons/m-2/s). the degree of phosphorylation is strictly regulated by light intensity and the light/dark transition has no influence. Phosphorylated in both mesophyll and bundle sheath cells. The phosphorylation at Ser-528 may be important for the phosphorylation at Thr-527 and may also be regulated by light intensity. Isoform C4PPDKZM1 mainly localized in mesophyll cells and only a low level is found in bundle sheath cells. Isoform CYPPDKZM1 expressed in roots, stems and etiolated leaves.

Its subcellular location is the plastid. It is found in the chloroplast. The protein localises to the cytoplasm. The catalysed reaction is pyruvate + phosphate + ATP = phosphoenolpyruvate + AMP + diphosphate + H(+). Its pathway is photosynthesis; C4 acid pathway. With respect to regulation, activated by light-induced dephosphorylation. Inhibited by dark-induced phosphorylation. Both reactions are catalyzed by PDRP1. Inactivated by cold due to the dissociation of the homotetramer. Independent of circadian regulation. In terms of biological role, formation of phosphoenolpyruvate, which is the primary acceptor of CO(2) in C4 and some Crassulacean acid metabolism plants. The polypeptide is Pyruvate, phosphate dikinase 1, chloroplastic (Zea mays (Maize)).